Here is a 535-residue protein sequence, read N- to C-terminus: Berberine bridge enzyme-like 3 (535 aa).

A signal peptide spans 1–19 (MKEALFGLYLVLLVSGLEA). A disulfide bridge connects residues Cys32 and Cys95. Asn52 is a glycosylation site (N-linked (GlcNAc...) asparagine). The region spanning 73 to 247 (NNKNLLAIVV…LSWKINLVEV (175 aa)) is the FAD-binding PCMH-type domain. Positions 110 to 172 (HDNEGLSYVS…QTLAFPAGIC (63 aa)) form a cross-link, 6-(S-cysteinyl)-8alpha-(pros-histidyl)-FAD (His-Cys). N-linked (GlcNAc...) asparagine glycans are attached at residues Asn214, Asn257, Asn292, Asn321, Asn341, Asn415, Asn439, and Asn444.

This sequence belongs to the oxygen-dependent FAD-linked oxidoreductase family. FAD is required as a cofactor. The FAD cofactor is bound via a bicovalent 6-S-cysteinyl, 8alpha-N1-histidyl FAD linkage.

Its subcellular location is the endoplasmic reticulum. The protein resides in the cell membrane. It localises to the secreted. It is found in the cell wall. In terms of biological role, flavin-dependent oxidoreductase involved in the biosynthetic pathway to 4-hydroxyindole-3-carbonyl nitrile (4-OH-ICN), a cyanogenic metabolite required for inducible pathogen defense. Converts indole cyanohydrin into indole-3-carbonyl nitrile (ICN). This chain is Berberine bridge enzyme-like 3, found in Arabidopsis thaliana (Mouse-ear cress).